The primary structure comprises 1180 residues: Phosphatidylinositol 4-kinase (1180 aa).

One can recognise a PIK helical domain in the interval 1-206; the sequence is MNKISDTIII…SVYLHSPSTS (206 aa). Disordered regions lie at residues 15-84, 257-327, 355-391, 768-799, and 832-894; these read NEDE…KHKE, ENDH…ENDN, TSPI…NNIN, TISN…IPHS, and AISP…SPFG. The segment covering 38 to 74 has biased composition (low complexity); it reads NNNNNNILTNVNNNKNNTITSSGGSDSSSSSSNNNNN. Positions 75 to 84 are enriched in basic residues; sequence KIKKSKKHKE. Positions 257-270 are enriched in basic and acidic residues; sequence ENDHHIENDPKKDI. 4 stretches are compositionally biased toward low complexity: residues 271–325, 364–391, 768–793, and 835–879; these read NSNN…SGEN, NNNN…NNIN, TISN…PTLP, and PPSQ…SPTN. A PI3K/PI4K catalytic domain is found at 895–1164; sequence ESWQEKIERY…LISYSIDHFK (270 aa). A G-loop region spans residues 901–907; that stretch reads IERYKKI. Residues 1030–1038 form a catalytic loop region; it reads QIKDRHNGN. Residues 1049-1073 form an activation loop region; it reads HIDFGFILSNSPGNISFESAPFKLT.

It belongs to the PI3/PI4-kinase family. Type III PI4K subfamily.

It carries out the reaction a 1,2-diacyl-sn-glycero-3-phospho-(1D-myo-inositol) + ATP = a 1,2-diacyl-sn-glycero-3-phospho-(1D-myo-inositol 4-phosphate) + ADP + H(+). Functionally, acts on phosphatidylinositol (PtdIns) in the first committed step in the production of the second messenger inositol-1,4,5,-trisphosphate. The protein is Phosphatidylinositol 4-kinase (pikD) of Dictyostelium discoideum (Social amoeba).